The chain runs to 148 residues: Large ribosomal subunit protein bL9 (148 aa).

It belongs to the bacterial ribosomal protein bL9 family.

Its function is as follows. Binds to the 23S rRNA. The chain is Large ribosomal subunit protein bL9 from Pseudomonas putida (strain ATCC 700007 / DSM 6899 / JCM 31910 / BCRC 17059 / LMG 24140 / F1).